The sequence spans 563 residues: DNA mismatch repair protein MutL (563 aa).

It belongs to the DNA mismatch repair MutL/HexB family.

Functionally, this protein is involved in the repair of mismatches in DNA. It is required for dam-dependent methyl-directed DNA mismatch repair. May act as a 'molecular matchmaker', a protein that promotes the formation of a stable complex between two or more DNA-binding proteins in an ATP-dependent manner without itself being part of a final effector complex. In Trichormus variabilis (strain ATCC 29413 / PCC 7937) (Anabaena variabilis), this protein is DNA mismatch repair protein MutL.